The following is a 175-amino-acid chain: MELTVGRVVKAHGISGEIVVEIRTDDPAARFAPGNTLRAKPSRGGPERSCVIESAREHGGRLLVRLAGVTDRDAADALRGTLFVVDSAELPDIDEPDTYYDHQLEGLQVRTTGGRRVGAVAEVLHTAAGELLAVRDDADGAPREVLVPFVSAIVTAVSLDDGLIEIDPPDGLLDL.

A PRC barrel domain is found at Pro96–Leu172.

Belongs to the RimM family. In terms of assembly, binds ribosomal protein uS19.

The protein resides in the cytoplasm. An accessory protein needed during the final step in the assembly of 30S ribosomal subunit, possibly for assembly of the head region. Essential for efficient processing of 16S rRNA. May be needed both before and after RbfA during the maturation of 16S rRNA. It has affinity for free ribosomal 30S subunits but not for 70S ribosomes. The protein is Ribosome maturation factor RimM of Mycolicibacterium paratuberculosis (strain ATCC BAA-968 / K-10) (Mycobacterium paratuberculosis).